The sequence spans 397 residues: Elongation factor Tu (397 aa).

The tr-type G domain maps to 10 to 206 (KPHVNIGTIG…AVDESIPDPV (197 aa)). The interval 19-26 (GHVDHGKT) is G1. A GTP-binding site is contributed by 19–26 (GHVDHGKT). Thr26 is a Mg(2+) binding site. The G2 stretch occupies residues 62–66 (GITIN). Residues 83-86 (DAPG) are G3. Residues 83–87 (DAPGH) and 138–141 (NKSD) contribute to the GTP site. A G4 region spans residues 138 to 141 (NKSD). A G5 region spans residues 176–178 (SAL).

Belongs to the TRAFAC class translation factor GTPase superfamily. Classic translation factor GTPase family. EF-Tu/EF-1A subfamily. In terms of assembly, monomer.

It localises to the cytoplasm. The enzyme catalyses GTP + H2O = GDP + phosphate + H(+). Functionally, GTP hydrolase that promotes the GTP-dependent binding of aminoacyl-tRNA to the A-site of ribosomes during protein biosynthesis. This Mycobacteroides abscessus (strain ATCC 19977 / DSM 44196 / CCUG 20993 / CIP 104536 / JCM 13569 / NCTC 13031 / TMC 1543 / L948) (Mycobacterium abscessus) protein is Elongation factor Tu.